The chain runs to 96 residues: Interleukin-8 (96 aa).

The signal sequence occupies residues 1–22 (MTSKLAIALLATFMLSAALCEA). The residue at position 27 (R27) is a Citrulline. Cystine bridges form between C34–C61 and C36–C78.

The protein belongs to the intercrine alpha (chemokine CxC) family. In terms of assembly, homodimer. Interacts with TNFAIP6 (via Link domain); this interaction interferes with chemokine binding to glycosaminoglycans. Citrullination at Arg-27 prevents proteolysis, and dampens tissue inflammation, it also enhances leukocytosis, possibly through impaired chemokine clearance from the blood circulation.

The protein resides in the secreted. Its function is as follows. Chemotactic factor that mediates inflammatory response by attracting neutrophils, basophils, and T-cells to clear pathogens and protect the host from infection. Also plays an important role in neutrophil activation. Released in response to an inflammatory stimulus, exerts its effect by binding to the G-protein-coupled receptors CXCR1 and CXCR2, primarily found in neutrophils, monocytes and endothelial cells. G-protein heterotrimer (alpha, beta, gamma subunits) constitutively binds to CXCR1/CXCR2 receptor and activation by IL8 leads to beta and gamma subunits release from Galpha (GNAI2 in neutrophils) and activation of several downstream signaling pathways including PI3K and MAPK pathways. This chain is Interleukin-8 (CXCL8), found in Dasypus novemcinctus (Nine-banded armadillo).